We begin with the raw amino-acid sequence, 1193 residues long: DNA-directed RNA polymerase subunit beta (1193 aa).

Acidic residues predominate over residues 1152–1161 (IEMRDLEDDE). Residues 1152–1193 (IEMRDLEDDEETKKADGLALSNDEDAADLAPVDLERDAVTKE) form a disordered region. A compositionally biased stretch (basic and acidic residues) spans 1184 to 1193 (DLERDAVTKE).

Belongs to the RNA polymerase beta chain family. The RNAP catalytic core consists of 2 alpha, 1 beta, 1 beta' and 1 omega subunit. When a sigma factor is associated with the core the holoenzyme is formed, which can initiate transcription.

The catalysed reaction is RNA(n) + a ribonucleoside 5'-triphosphate = RNA(n+1) + diphosphate. Functionally, DNA-dependent RNA polymerase catalyzes the transcription of DNA into RNA using the four ribonucleoside triphosphates as substrates. The sequence is that of DNA-directed RNA polymerase subunit beta from Bacillus pumilus (strain SAFR-032).